The primary structure comprises 191 residues: TATA-box-binding protein (191 aa).

2 repeat units span residues 18–94 and 108–185.

The protein belongs to the TBP family. In terms of assembly, belongs to the TFIID complex together with the TBP-associated factors (TAFs). Binds DNA as monomer.

The protein resides in the nucleus. Its function is as follows. General transcription factor that functions at the core of the DNA-binding multiprotein factor TFIID. Binding of TFIID to the TATA box is the initial transcriptional step of the pre-initiation complex (PIC), playing a role in the activation of eukaryotic genes transcribed by RNA polymerase II. This is TATA-box-binding protein from Acetabularia peniculus (Green alga).